The following is a 1345-amino-acid chain: Probable membrane antigen 75 (1345 aa).

The protein resides in the virion tegument. This chain is Probable membrane antigen 75 (75), found in Equine herpesvirus 2 (strain 86/87) (EHV-2).